Consider the following 534-residue polypeptide: uncharacterized protein (534 aa).

The next 5 helical transmembrane spans lie at 4–22 (ILVL…RVSF), 24–46 (GISL…GWTI), 56–75 (ALFV…RGLA), 82–104 (AITG…RLLG), and 134–156 (PAAV…VLFV). The interval 167–187 (GDSDGTDSASETSGQSSAEIA) is disordered. Polar residues predominate over residues 172–187 (TDSASETSGQSSAEIA). RCK C-terminal domains are found at residues 180–264 (GQSS…TLGE) and 265–349 (LQDT…AVGH). The next 6 membrane-spanning stretches (helical) occupy residues 359 to 378 (LLSL…LSLQ), 382 to 401 (FSMS…ILGH), 408 to 430 (IRGS…LFLA), 445 to 467 (MERG…LVGF), 479 to 501 (WQSL…LTGA), and 511 to 533 (YVAA…VELI).

Belongs to the AAE transporter (TC 2.A.81) family.

The protein localises to the cell membrane. This is an uncharacterized protein from Rhodopirellula baltica (strain DSM 10527 / NCIMB 13988 / SH1).